The following is a 336-amino-acid chain: uncharacterized protein (336 aa).

29–36 (GPKSSGKS) is a binding site for ATP.

This sequence belongs to the archaeal ATPase family.

This is an uncharacterized protein from Methanocaldococcus jannaschii (strain ATCC 43067 / DSM 2661 / JAL-1 / JCM 10045 / NBRC 100440) (Methanococcus jannaschii).